A 183-amino-acid chain; its full sequence is Acireductone dioxygenase (183 aa).

Fe(2+) contacts are provided by His-99, His-101, Glu-105, and His-144. Residues His-99, His-101, Glu-105, and His-144 each contribute to the Ni(2+) site.

The protein belongs to the acireductone dioxygenase (ARD) family. Monomer. The cofactor is Fe(2+). It depends on Ni(2+) as a cofactor.

It carries out the reaction 1,2-dihydroxy-5-(methylsulfanyl)pent-1-en-3-one + O2 = 3-(methylsulfanyl)propanoate + CO + formate + 2 H(+). The catalysed reaction is 1,2-dihydroxy-5-(methylsulfanyl)pent-1-en-3-one + O2 = 4-methylsulfanyl-2-oxobutanoate + formate + 2 H(+). The protein operates within amino-acid biosynthesis; L-methionine biosynthesis via salvage pathway; L-methionine from S-methyl-5-thio-alpha-D-ribose 1-phosphate: step 5/6. In terms of biological role, catalyzes 2 different reactions between oxygen and the acireductone 1,2-dihydroxy-3-keto-5-methylthiopentene (DHK-MTPene) depending upon the metal bound in the active site. Fe-containing acireductone dioxygenase (Fe-ARD) produces formate and 2-keto-4-methylthiobutyrate (KMTB), the alpha-ketoacid precursor of methionine in the methionine recycle pathway. Ni-containing acireductone dioxygenase (Ni-ARD) produces methylthiopropionate, carbon monoxide and formate, and does not lie on the methionine recycle pathway. The chain is Acireductone dioxygenase from Microcystis aeruginosa (strain NIES-843 / IAM M-2473).